Consider the following 424-residue polypeptide: Histidine--tRNA ligase (424 aa).

This sequence belongs to the class-II aminoacyl-tRNA synthetase family. As to quaternary structure, homodimer.

It localises to the cytoplasm. It catalyses the reaction tRNA(His) + L-histidine + ATP = L-histidyl-tRNA(His) + AMP + diphosphate + H(+). The sequence is that of Histidine--tRNA ligase (hisS) from Bacillus subtilis (strain 168).